Consider the following 917-residue polypeptide: Spermatogenesis-associated protein 31D4 (917 aa).

A helical transmembrane segment spans residues 29-49; that stretch reads FICLSGLGLFILYLFYMVLTL. Disordered regions lie at residues 55 to 80, 152 to 195, and 773 to 798; these read EKNN…KDRK, SVSP…PPPL, and SQET…RSNS. The span at 63–74 shows a compositional bias: basic residues; it reads HQGRARRKRKSV. A compositionally biased stretch (low complexity) spans 152 to 163; the sequence is SVSPLASSASGA. Polar residues predominate over residues 164–177; it reads ESSFTLASTPSATT. Positions 782 to 798 are enriched in basic and acidic residues; sequence LLHDPETSSDEDLRSNS.

The protein belongs to the SPATA31 family.

It localises to the membrane. May play a role in spermatogenesis. This is Spermatogenesis-associated protein 31D4 (SPATA31D4) from Homo sapiens (Human).